A 465-amino-acid chain; its full sequence is Cruciferin CRU4 (465 aa).

A signal peptide spans 1-22 (MGPTSLLSFFFTFLTLFHGFTA). Intrachain disulfides connect C29/C62 and C105/C283. 2 Cupin type-1 domains span residues 34–236 (LNAL…ETAQ) and 289–438 (ENLD…QEAR). The residue at position 108 (T108) is a Phosphothreonine. Residues 112 to 135 (SPVFGQGQGQEQGQGQGQGQGQGF) form a disordered region. Gly residues predominate over residues 117–133 (QGQGQEQGQGQGQGQGQ). Y306 carries the post-translational modification Phosphotyrosine. Residues S308 and S443 each carry the phosphoserine modification.

This sequence belongs to the 11S seed storage protein (globulins) family. Heterohexamer; each subunit is composed of an acidic and a basic chain derived from a single precursor and linked by a disulfide bond.

It localises to the rough endoplasmic reticulum. Functionally, this is a seed storage protein. The protein is Cruciferin CRU4 (CRU4) of Brassica napus (Rape).